The following is a 207-amino-acid chain: Large ribosomal subunit protein uL4 (207 aa).

The tract at residues 49-78 is disordered; sequence HAVKNRSAVSGGGRKPWRQKGTGRARQGSI.

It belongs to the universal ribosomal protein uL4 family. As to quaternary structure, part of the 50S ribosomal subunit.

One of the primary rRNA binding proteins, this protein initially binds near the 5'-end of the 23S rRNA. It is important during the early stages of 50S assembly. It makes multiple contacts with different domains of the 23S rRNA in the assembled 50S subunit and ribosome. In terms of biological role, forms part of the polypeptide exit tunnel. This is Large ribosomal subunit protein uL4 from Streptococcus pyogenes serotype M49 (strain NZ131).